Consider the following 759-residue polypeptide: ARF GTPase-activating protein GIT2 (759 aa).

The region spanning 1-124 (MSKRLRSNDV…AFVHRLPCRD (124 aa)) is the Arf-GAP domain. Residues 11–34 (CADCSGPDPSWASVNRGTLICDEC) form a C4-type zinc finger. 3 ANK repeats span residues 132-161 (DLSKQLHSSVRTGNLETCLRLLSLGAQANF), 166-198 (KGSTPLHVASKAGQILQAELLAVYGADPGTHDS), and 199-228 (SGKTPVDYARQGGHRELAERLVEIQYELTD). Disordered stretches follow at residues 376-422 (VSNQ…DLSD) and 469-641 (QSEN…PSTE). Residues 385–402 (QDNDQPDYDSVASDEDTD) are compositionally biased toward acidic residues. Positions 451 to 478 (NNNLSGELRIMQKKLQTLQSENSSLRRQ) form a coiled coil. Positions 469 to 489 (QSENSSLRRQATASACQVQTA) are enriched in polar residues. The segment covering 555–569 (TSSSSLPSFPSTLSW) has biased composition (low complexity). Basic and acidic residues predominate over residues 570 to 583 (SRDESTRRASRLEK).

In terms of assembly, may form heterooligomers with GIT1. Directly interacts with protein Piccolo/PCLO. Interacts with PPFIA1 and PPFIA2. Interacts with ARHGEF7. Identified in a complex with ARHGEF6 and BIN2. Interacts with PAK3. Interacts with PXN/paxillin. Interacts with TGFB1I1. Forms a complex with EFNB1 and GRB4/NCK2.

Functionally, GTPase-activating protein for ADP ribosylation factor family members, including ARF1. In Rattus norvegicus (Rat), this protein is ARF GTPase-activating protein GIT2 (Git2).